The following is an 863-amino-acid chain: Leucine--tRNA ligase (863 aa).

The short motif at 42 to 52 is the 'HIGH' region element; sequence PYPSGRLHMGH. The 'KMSKS' region motif lies at 622–626; it reads KMSKS. Residue lysine 625 participates in ATP binding.

This sequence belongs to the class-I aminoacyl-tRNA synthetase family.

It is found in the cytoplasm. It carries out the reaction tRNA(Leu) + L-leucine + ATP = L-leucyl-tRNA(Leu) + AMP + diphosphate. This is Leucine--tRNA ligase from Shewanella frigidimarina (strain NCIMB 400).